The chain runs to 86 residues: Putative membrane protein insertion efficiency factor (86 aa).

This sequence belongs to the UPF0161 family.

It localises to the cell inner membrane. Its function is as follows. Could be involved in insertion of integral membrane proteins into the membrane. This chain is Putative membrane protein insertion efficiency factor, found in Haemophilus influenzae (strain 86-028NP).